Here is a 370-residue protein sequence, read N- to C-terminus: Dual-specificity RNA methyltransferase RlmN (370 aa).

Catalysis depends on Glu93, which acts as the Proton acceptor. Residues 99–331 (DRKRGTLCVS…TRVRRTRGDD (233 aa)) enclose the Radical SAM core domain. Cys106 and Cys336 are oxidised to a cystine. Cys113, Cys117, and Cys120 together coordinate [4Fe-4S] cluster. Residues 162 to 163 (GE), Ser194, 216 to 218 (SLH), and Asn293 each bind S-adenosyl-L-methionine. Cys336 (S-methylcysteine intermediate) is an active-site residue.

This sequence belongs to the radical SAM superfamily. RlmN family. Requires [4Fe-4S] cluster as cofactor.

It localises to the cytoplasm. It carries out the reaction adenosine(2503) in 23S rRNA + 2 reduced [2Fe-2S]-[ferredoxin] + 2 S-adenosyl-L-methionine = 2-methyladenosine(2503) in 23S rRNA + 5'-deoxyadenosine + L-methionine + 2 oxidized [2Fe-2S]-[ferredoxin] + S-adenosyl-L-homocysteine. The enzyme catalyses adenosine(37) in tRNA + 2 reduced [2Fe-2S]-[ferredoxin] + 2 S-adenosyl-L-methionine = 2-methyladenosine(37) in tRNA + 5'-deoxyadenosine + L-methionine + 2 oxidized [2Fe-2S]-[ferredoxin] + S-adenosyl-L-homocysteine. In terms of biological role, specifically methylates position 2 of adenine 2503 in 23S rRNA and position 2 of adenine 37 in tRNAs. m2A2503 modification seems to play a crucial role in the proofreading step occurring at the peptidyl transferase center and thus would serve to optimize ribosomal fidelity. The sequence is that of Dual-specificity RNA methyltransferase RlmN from Coxiella burnetii (strain RSA 493 / Nine Mile phase I).